The primary structure comprises 225 residues: Cytidylate kinase (225 aa).

Residue Gly11–Thr19 coordinates ATP.

This sequence belongs to the cytidylate kinase family. Type 1 subfamily.

It is found in the cytoplasm. It catalyses the reaction CMP + ATP = CDP + ADP. The catalysed reaction is dCMP + ATP = dCDP + ADP. The protein is Cytidylate kinase of Bacillus anthracis (strain A0248).